Here is a 32-residue protein sequence, read N- to C-terminus: Secreted protein F2 (32 aa).

Its subcellular location is the secreted. The chain is Secreted protein F2 from Globisporangium hypogynum (Pythium hypogynum).